Consider the following 755-residue polypeptide: Periplasmic nitrate reductase (755 aa).

The tat-type signal signal peptide spans 1–32 (MSTSRRDFLKYFAMSAAVAAASGAGFGSLALA). A 4Fe-4S Mo/W bis-MGD-type domain is found at 38 to 93 (EKWVKGVCRYCGTGCGVLVGVKDGKAVAIQGDPNNHNAGLLCLKGSLLIPVLNSKE). Residues Cys45, Cys48, Cys52, and Cys79 each coordinate [4Fe-4S] cluster. Mo-bis(molybdopterin guanine dinucleotide) is bound by residues Lys81, Gln143, Asn168, Cys172, 208 to 212 (NTSEA), 236 to 238 (DPR), 255 to 257 (GTD), Met340, Gln344, Asn450, 475 to 477 (IEA), and 647 to 656 (SMRVIDHWHT). Substrate-binding positions include 648–653 (MRVIDH) and Phe721. Asn729 and Lys746 together coordinate Mo-bis(molybdopterin guanine dinucleotide).

It belongs to the prokaryotic molybdopterin-containing oxidoreductase family. NasA/NapA/NarB subfamily. In terms of assembly, monomer. Component of the periplasmic nitrate reductase NapAB complex composed of NapA and NapB. It depends on [4Fe-4S] cluster as a cofactor. Requires Mo-bis(molybdopterin guanine dinucleotide) as cofactor. In terms of processing, predicted to be exported by the Tat system. The position of the signal peptide cleavage has been experimentally proven.

It is found in the periplasm. The catalysed reaction is 2 Fe(II)-[cytochrome] + nitrate + 2 H(+) = 2 Fe(III)-[cytochrome] + nitrite + H2O. With respect to regulation, activated by potassium and sodium ions and inhibited by magnesium and calcium ions. Functionally, catalytic subunit of the periplasmic nitrate reductase complex NapAB. Receives electrons from NapB and catalyzes the reduction of nitrate to nitrite. This chain is Periplasmic nitrate reductase, found in Desulfovibrio desulfuricans (strain ATCC 27774 / DSM 6949 / MB).